The sequence spans 249 residues: Nodulation protein H (249 aa).

Required for the formation of sulfated nod factor. Proposed to transfer activated sulfate (PAPS) to a N-acetylglucosamine of the nod factor. This Rhizobium tropici protein is Nodulation protein H (nodH).